Reading from the N-terminus, the 59-residue chain is UPF0391 membrane protein AZC_4184 (59 aa).

2 helical membrane-spanning segments follow: residues 4 to 24 (WALT…TAVA) and 30 to 50 (IAKI…VMGF).

The protein belongs to the UPF0391 family.

It localises to the cell membrane. This Azorhizobium caulinodans (strain ATCC 43989 / DSM 5975 / JCM 20966 / LMG 6465 / NBRC 14845 / NCIMB 13405 / ORS 571) protein is UPF0391 membrane protein AZC_4184.